Here is a 414-residue protein sequence, read N- to C-terminus: MINLKLLETNYDEFVKKLEGKNVKASLLDELLHTFNELKQKRKALENFQAIQNAKSKELGVKARAGEDVSELKSELNLNKAALADADEIVKQYEEKLEQISFSVPNITDDDVPFGKDENDNVCIKTVLEPTKFDFKPKEHWELGESLGWLDFERGAKLSGSRFTVLRGMGARLGRALVNYMIDFNSARGFELVNVPYLVSSNTLFGTGQLPKFEEDLYKVRDEDLYLIPTSEVPVTNLYNDTIIEAEQLPIKMTCYSACFRQEAGSAGRDTRGMIRQHQFEKVELVSITKPDQSEGVLAEMISCASDLLTSLGLPHRHMLLCSGDLGFSAAKTIDLEVWLPGQGKYREISSISNTRDFQARRAKIRFKDGKKNMLVNTLNGSSLAVGRTLIAIMENYQKADGTIEIPEVLKRYM.

Residue 230–232 participates in L-serine binding; sequence TSE. 261–263 lines the ATP pocket; it reads RQE. An L-serine-binding site is contributed by E284. Residue 348–351 coordinates ATP; it reads EISS. S382 provides a ligand contact to L-serine.

The protein belongs to the class-II aminoacyl-tRNA synthetase family. Type-1 seryl-tRNA synthetase subfamily. Homodimer. The tRNA molecule binds across the dimer.

It is found in the cytoplasm. It carries out the reaction tRNA(Ser) + L-serine + ATP = L-seryl-tRNA(Ser) + AMP + diphosphate + H(+). It catalyses the reaction tRNA(Sec) + L-serine + ATP = L-seryl-tRNA(Sec) + AMP + diphosphate + H(+). It functions in the pathway aminoacyl-tRNA biosynthesis; selenocysteinyl-tRNA(Sec) biosynthesis; L-seryl-tRNA(Sec) from L-serine and tRNA(Sec): step 1/1. Functionally, catalyzes the attachment of serine to tRNA(Ser). Is also able to aminoacylate tRNA(Sec) with serine, to form the misacylated tRNA L-seryl-tRNA(Sec), which will be further converted into selenocysteinyl-tRNA(Sec). The protein is Serine--tRNA ligase of Campylobacter concisus (strain 13826).